A 477-amino-acid polypeptide reads, in one-letter code: Glutamate--tRNA ligase (477 aa).

A 'HIGH' region motif is present at residues 8-18 (PSPTGTLHIGT). Residues 247-251 (KLSKR) carry the 'KMSKS' region motif. Residue K250 participates in ATP binding.

It belongs to the class-I aminoacyl-tRNA synthetase family. Glutamate--tRNA ligase type 1 subfamily. In terms of assembly, monomer.

Its subcellular location is the cytoplasm. It carries out the reaction tRNA(Glu) + L-glutamate + ATP = L-glutamyl-tRNA(Glu) + AMP + diphosphate. Its function is as follows. Catalyzes the attachment of glutamate to tRNA(Glu) in a two-step reaction: glutamate is first activated by ATP to form Glu-AMP and then transferred to the acceptor end of tRNA(Glu). This is Glutamate--tRNA ligase from Parasynechococcus marenigrum (strain WH8102).